A 440-amino-acid chain; its full sequence is Tryptophan synthase beta chain (440 aa).

Lys110 bears the N6-(pyridoxal phosphate)lysine mark.

The protein belongs to the TrpB family. As to quaternary structure, tetramer of two alpha and two beta chains. It depends on pyridoxal 5'-phosphate as a cofactor.

The enzyme catalyses (1S,2R)-1-C-(indol-3-yl)glycerol 3-phosphate + L-serine = D-glyceraldehyde 3-phosphate + L-tryptophan + H2O. The protein operates within amino-acid biosynthesis; L-tryptophan biosynthesis; L-tryptophan from chorismate: step 5/5. The beta subunit is responsible for the synthesis of L-tryptophan from indole and L-serine. This is Tryptophan synthase beta chain from Thermococcus gammatolerans (strain DSM 15229 / JCM 11827 / EJ3).